A 193-amino-acid chain; its full sequence is Xanthine phosphoribosyltransferase (193 aa).

The xanthine site is built by leucine 20 and threonine 27. Alanine 128–alanine 132 is a 5-phospho-alpha-D-ribose 1-diphosphate binding site. Residue lysine 156 coordinates xanthine.

The protein belongs to the purine/pyrimidine phosphoribosyltransferase family. Xpt subfamily. As to quaternary structure, homodimer.

The protein resides in the cytoplasm. The catalysed reaction is XMP + diphosphate = xanthine + 5-phospho-alpha-D-ribose 1-diphosphate. It functions in the pathway purine metabolism; XMP biosynthesis via salvage pathway; XMP from xanthine: step 1/1. Its function is as follows. Converts the preformed base xanthine, a product of nucleic acid breakdown, to xanthosine 5'-monophosphate (XMP), so it can be reused for RNA or DNA synthesis. The chain is Xanthine phosphoribosyltransferase from Streptococcus pneumoniae serotype 19F (strain G54).